The primary structure comprises 295 residues: Bifunctional protein FolD (295 aa).

Residues Gly-166–Ser-168, Ser-191, and Ile-232 contribute to the NADP(+) site.

The protein belongs to the tetrahydrofolate dehydrogenase/cyclohydrolase family. As to quaternary structure, homodimer.

It carries out the reaction (6R)-5,10-methylene-5,6,7,8-tetrahydrofolate + NADP(+) = (6R)-5,10-methenyltetrahydrofolate + NADPH. The enzyme catalyses (6R)-5,10-methenyltetrahydrofolate + H2O = (6R)-10-formyltetrahydrofolate + H(+). The protein operates within one-carbon metabolism; tetrahydrofolate interconversion. Catalyzes the oxidation of 5,10-methylenetetrahydrofolate to 5,10-methenyltetrahydrofolate and then the hydrolysis of 5,10-methenyltetrahydrofolate to 10-formyltetrahydrofolate. The protein is Bifunctional protein FolD of Rhodopseudomonas palustris (strain ATCC BAA-98 / CGA009).